The primary structure comprises 581 residues: Adenine deaminase (581 aa).

It belongs to the metallo-dependent hydrolases superfamily. Adenine deaminase family. Requires Mn(2+) as cofactor.

It carries out the reaction adenine + H2O + H(+) = hypoxanthine + NH4(+). This Brucella melitensis biotype 1 (strain ATCC 23456 / CCUG 17765 / NCTC 10094 / 16M) protein is Adenine deaminase.